The following is a 440-amino-acid chain: Putative epoxide hydrolase (440 aa).

The interval 1-21 (MTKTLAEQPGEGAAPVSPSPS) is disordered. A signal peptide (tat-type signal) is located at residues 1–49 (MTKTLAEQPGEGAAPVSPSPSRRALLHGAAGLGALAAGAAVAGPGLAFA).

This sequence belongs to the peptidase S33 family. In terms of processing, predicted to be exported by the Tat system. The position of the signal peptide cleavage has not been experimentally proven.

The catalysed reaction is an epoxide + H2O = an ethanediol. The protein is Putative epoxide hydrolase of Stigmatella aurantiaca (strain DW4/3-1).